The sequence spans 174 residues: MTRILGIDPGSQRTGIGIIDVDESGRSRHVFHAPLVLLGEGDFAQRLKRLLHGLGELIETYQPQEVAIEKVFMGKSADSALKLGHARGAAICAVVLRDLPVHEYAATEIKLALVGKGGADKVQVQHMVGIMLNLKGKLQADAADALAVAITHAHVRATAQRLGVNTQQAWSRKR.

Active-site residues include aspartate 8, glutamate 69, and aspartate 141. Residues aspartate 8, glutamate 69, and aspartate 141 each contribute to the Mg(2+) site.

It belongs to the RuvC family. Homodimer which binds Holliday junction (HJ) DNA. The HJ becomes 2-fold symmetrical on binding to RuvC with unstacked arms; it has a different conformation from HJ DNA in complex with RuvA. In the full resolvosome a probable DNA-RuvA(4)-RuvB(12)-RuvC(2) complex forms which resolves the HJ. Mg(2+) is required as a cofactor.

The protein localises to the cytoplasm. It carries out the reaction Endonucleolytic cleavage at a junction such as a reciprocal single-stranded crossover between two homologous DNA duplexes (Holliday junction).. In terms of biological role, the RuvA-RuvB-RuvC complex processes Holliday junction (HJ) DNA during genetic recombination and DNA repair. Endonuclease that resolves HJ intermediates. Cleaves cruciform DNA by making single-stranded nicks across the HJ at symmetrical positions within the homologous arms, yielding a 5'-phosphate and a 3'-hydroxyl group; requires a central core of homology in the junction. The consensus cleavage sequence is 5'-(A/T)TT(C/G)-3'. Cleavage occurs on the 3'-side of the TT dinucleotide at the point of strand exchange. HJ branch migration catalyzed by RuvA-RuvB allows RuvC to scan DNA until it finds its consensus sequence, where it cleaves and resolves the cruciform DNA. This Xanthomonas campestris pv. campestris (strain 8004) protein is Crossover junction endodeoxyribonuclease RuvC.